The primary structure comprises 321 residues: Ubiquinone biosynthesis protein COQ4, mitochondrial (321 aa).

Positions 205, 206, 209, and 221 each coordinate Zn(2+).

The protein belongs to the COQ4 family. Component of a multi-subunit COQ enzyme complex, composed of at least COQ3, COQ4, COQ5, COQ6, COQ7 and COQ9. It depends on Zn(2+) as a cofactor.

It is found in the mitochondrion inner membrane. It carries out the reaction a 4-hydroxy-3-methoxy-5-(all-trans-polyprenyl)benzoate + H(+) = a 2-methoxy-6-(all-trans-polyprenyl)phenol + CO2. It functions in the pathway cofactor biosynthesis; ubiquinone biosynthesis. Its function is as follows. Lyase that catalyzes the C1-decarboxylation of 4-hydroxy-3-methoxy-5-(all-trans-polyprenyl)benzoic acid into 2-methoxy-6-(all-trans-polyprenyl)phenol during ubiquinone biosynthesis. In Candida tropicalis (strain ATCC MYA-3404 / T1) (Yeast), this protein is Ubiquinone biosynthesis protein COQ4, mitochondrial.